A 114-amino-acid chain; its full sequence is Large ribosomal subunit protein bL19 (114 aa).

The protein belongs to the bacterial ribosomal protein bL19 family.

Functionally, this protein is located at the 30S-50S ribosomal subunit interface and may play a role in the structure and function of the aminoacyl-tRNA binding site. The chain is Large ribosomal subunit protein bL19 from Bacillus cereus (strain AH187).